The chain runs to 154 residues: Endoribonuclease YbeY (154 aa).

Positions 114, 118, and 124 each coordinate Zn(2+).

Belongs to the endoribonuclease YbeY family. Zn(2+) serves as cofactor.

It is found in the cytoplasm. Its function is as follows. Single strand-specific metallo-endoribonuclease involved in late-stage 70S ribosome quality control and in maturation of the 3' terminus of the 16S rRNA. The protein is Endoribonuclease YbeY of Aggregatibacter actinomycetemcomitans (Actinobacillus actinomycetemcomitans).